Here is a 359-residue protein sequence, read N- to C-terminus: GTP 3',8-cyclase 1 (359 aa).

A Radical SAM core domain is found at Arg-21 to Glu-241. Arg-30 contacts GTP. The [4Fe-4S] cluster site is built by Cys-37 and Cys-41. Tyr-43 serves as a coordination point for S-adenosyl-L-methionine. [4Fe-4S] cluster is bound at residue Cys-44. Arg-80 is a binding site for GTP. Position 84 (Gly-84) interacts with S-adenosyl-L-methionine. Thr-115 contacts GTP. Ser-139 is a binding site for S-adenosyl-L-methionine. Lys-176 serves as a coordination point for GTP. Met-210 contributes to the S-adenosyl-L-methionine binding site. Residues Cys-273 and Cys-276 each coordinate [4Fe-4S] cluster. Arg-278 to Arg-280 is a GTP binding site. Cys-290 lines the [4Fe-4S] cluster pocket.

It belongs to the radical SAM superfamily. MoaA family. In terms of assembly, monomer and homodimer. [4Fe-4S] cluster is required as a cofactor.

The enzyme catalyses GTP + AH2 + S-adenosyl-L-methionine = (8S)-3',8-cyclo-7,8-dihydroguanosine 5'-triphosphate + 5'-deoxyadenosine + L-methionine + A + H(+). It participates in cofactor biosynthesis; molybdopterin biosynthesis. In terms of biological role, catalyzes the cyclization of GTP to (8S)-3',8-cyclo-7,8-dihydroguanosine 5'-triphosphate. In Mycobacterium tuberculosis (strain CDC 1551 / Oshkosh), this protein is GTP 3',8-cyclase 1.